The primary structure comprises 388 residues: 2-Hydroxyacid oxidase (388 aa).

The segment at 1–21 (MENQFKNNNNSSSIETSNQFS) is disordered. One can recognise an FMN hydroxy acid dehydrogenase domain in the interval 26–384 (NRLDSFVSVS…NNSIIWDQNK (359 aa)). Tyr52 is a binding site for glyoxylate. FMN is bound by residues 105–107 (PWA), Ser134, 156–158 (QLY), and Thr184. Tyr158 is a binding site for glyoxylate. Glyoxylate is bound at residue Arg193. FMN is bound by residues Lys255 and Ser277. Glyoxylate-binding residues include His279 and Arg282. The Proton acceptor role is filled by His279. Residues 310-314 (DGGIR) and 333-334 (GR) each bind FMN.

This sequence belongs to the FMN-dependent alpha-hydroxy acid dehydrogenase family. Homotetramer. FMN serves as cofactor.

The enzyme catalyses glycolate + O2 = glyoxylate + H2O2. It carries out the reaction a (2S)-2-hydroxycarboxylate + O2 = a 2-oxocarboxylate + H2O2. Catalyzes the oxidation of glycolate to glyoxylate, with a reduction of O2 to H2O2. May use other 2-hydroxyacids as substrates. The polypeptide is 2-Hydroxyacid oxidase (haox) (Dictyostelium discoideum (Social amoeba)).